The primary structure comprises 566 residues: Beta,beta-carotene 15,15'-dioxygenase (566 aa).

Residues His-172, His-237, His-308, and His-514 each coordinate Fe cation. The tract at residues Pro-530–Leu-566 is disordered.

This sequence belongs to the carotenoid oxygenase family. Fe(2+) is required as a cofactor. In terms of tissue distribution, expressed in liver, kidney, small intestine and testis.

The protein localises to the cytoplasm. It localises to the cytosol. It catalyses the reaction all-trans-beta-carotene + O2 = 2 all-trans-retinal. The protein operates within cofactor metabolism; retinol metabolism. Its function is as follows. Symmetrically cleaves beta-carotene into two molecules of retinal using a dioxygenase mechanism. The sequence is that of Beta,beta-carotene 15,15'-dioxygenase from Mus musculus (Mouse).